The primary structure comprises 386 residues: Paralemmin-1 (386 aa).

Residues 4-115 are a coiled coil; the sequence is VEANTLQQER…TKENLAEAAA (112 aa). Disordered stretches follow at residues 21–40, 51–149, 240–290, and 321–378; these read RKRQTEIENKRRQLEDDRRQ, ERWL…PMKA, EATA…TMIF, and DAES…AKKQ. Basic and acidic residues-rich tracts occupy residues 24–40 and 68–95; these read QTEIENKRRQLEDDRRQ and AMKKQMQEDEVKTKELEETIQRLERELE. Residues 97–116 are compositionally biased toward low complexity; the sequence is LENSSSVTSTKENLAEAAAP. Composition is skewed to basic and acidic residues over residues 259-282, 322-334, and 365-377; these read PRREITGLQAKPRENSTEGAEPSR, AESKAEPEGKDHA, and EAKEAEPDMDAKK. Residues Cys-380 and Cys-382 are each lipidated (S-palmitoyl cysteine). Cys-383 is subject to Cysteine methyl ester. Cys-383 is lipidated: S-farnesyl cysteine. A propeptide spans 384–386 (removed in mature form); the sequence is TVM.

Belongs to the paralemmin family. In terms of assembly, interacts with dopamine receptor DRD3. In terms of processing, phosphorylated. Expressed in the lens (at protein level). Highly expressed in forebrain and cerebellum with lower expression in adrenal gland and heart. Expression weak or undetectable in other tissues.

The protein localises to the cell membrane. It is found in the cell projection. It localises to the filopodium membrane. The protein resides in the axon. Its subcellular location is the dendrite. The protein localises to the dendritic spine. It is found in the basolateral cell membrane. It localises to the apicolateral cell membrane. Its function is as follows. Involved in plasma membrane dynamics and cell process formation. Isoform 1 and isoform 2 are necessary for axonal and dendritic filopodia induction, for dendritic spine maturation and synapse formation in a palmitoylation-dependent manner. This chain is Paralemmin-1 (PALM), found in Gallus gallus (Chicken).